The following is a 214-amino-acid chain: Cytochrome b (214 aa).

4 helical membrane-spanning segments follow: residues 31 to 51, 75 to 96, 111 to 131, and 176 to 196; these read FGSM…FLAI, WIMQ…YIHI, WLSG…GYVL, and FFAL…IHIL. Heme b is bound by residues His81 and His95. Heme b is bound by residues His180 and His194. His199 serves as a coordination point for a ubiquinone.

It belongs to the cytochrome b family. The cytochrome bc1 complex contains 3 respiratory subunits (MT-CYB, CYC1 and UQCRFS1), 2 core proteins (UQCRC1 and UQCRC2) and probably 6 low-molecular weight proteins. It depends on heme b as a cofactor.

The protein resides in the mitochondrion inner membrane. In terms of biological role, component of the ubiquinol-cytochrome c reductase complex (complex III or cytochrome b-c1 complex) that is part of the mitochondrial respiratory chain. The b-c1 complex mediates electron transfer from ubiquinol to cytochrome c. Contributes to the generation of a proton gradient across the mitochondrial membrane that is then used for ATP synthesis. The chain is Cytochrome b (MT-CYB) from Trimeresurus stejnegeri (Chinese green tree viper).